The sequence spans 320 residues: Probable carboxylesterase M8 (320 aa).

The Involved in the stabilization of the negatively charged intermediate by the formation of the oxyanion hole signature appears at 52–54 (HGG). Active-site residues include Ser-137 and His-296.

Belongs to the 'GDXG' lipolytic enzyme family.

The enzyme catalyses a carboxylic ester + H2O = an alcohol + a carboxylate + H(+). It functions in the pathway secondary metabolite biosynthesis. Its function is as follows. Probable carboxylesterase; part of the gene cluster that mediates the biosynthesis of squalestatin S1 (SQS1, also known as zaragozic acid A), a heavily oxidized fungal polyketide that offers potent cholesterol lowering activity by targeting squalene synthase (SS). SQS1 is composed of a 2,8-dioxobicyclic[3.2.1]octane-3,4,5-tricarboxyclic acid core that is connected to two lipophilic polyketide arms. These initial steps feature the priming of an unusual benzoic acid starter unit onto the highly reducing polyketide synthase pks2, followed by oxaloacetate extension and product release to generate a tricarboxylic acid containing product. The phenylalanine ammonia lyase (PAL) M7 and the acyl-CoA ligase M9 are involved in transforming phenylalanine into benzoyl-CoA. The citrate synthase-like protein R3 is involved in connecting the C-alpha-carbons of the hexaketide chain and oxaloacetate to afford the tricarboxylic acid unit. The potential hydrolytic enzymes, M8 and M10, are in close proximity to pks2 and may participate in product release. On the other side, the tetraketide arm is synthesized by a the squalestatin tetraketide synthase pks1 and enzymatically esterified to the core in the last biosynthetic step, by the acetyltransferase M4. The biosynthesis of the tetraketide must involve 3 rounds of chain extension. After the first and second rounds methyl-transfer occurs, and in all rounds of extension the ketoreductase and dehydratase are active. The enoyl reductase and C-MeT of pks1 are not active in the final round of extension. The acetyltransferase M4 appears to have a broad substrate selectivity for its acyl CoA substrate, allowing the in vitro synthesis of novel squalestatins. The biosynthesis of SQS1 requires several oxidative steps likely performed by oxidoreductases M1, R1 and R2. Finally, in support of the identification of the cluster as being responsible for SQS1 production, the cluster contains a gene encoding a putative squalene synthase (SS) R6, suggesting a likely mechanism for self-resistance. The sequence is that of Probable carboxylesterase M8 from Phoma sp. (strain ATCC 20986 / MF5453).